A 34-amino-acid polypeptide reads, in one-letter code: Phallacidin proprotein 1 (34 aa).

A propeptide spanning residues 1–10 (MSDINATRLP) is cleaved from the precursor. Positions 11-17 (AWLVDCP) form a cross-link, cyclopeptide (Ala-Pro). Residues 12–16 (WLVDC) constitute a cross-link (2'-cysteinyl-6'-hydroxytryptophan sulfoxide (Trp-Cys)). A propeptide spanning residues 18–34 (CVGDDVNRLLTRGESLC) is cleaved from the precursor.

This sequence belongs to the MSDIN fungal toxin family. Processed by the macrocyclase-peptidase enzyme POPB to yield a toxic cyclic heptapeptide. POPB first removes 10 residues from the N-terminus. Conformational trapping of the remaining peptide forces the enzyme to release this intermediate rather than proceed to macrocyclization. The enzyme rebinds the remaining peptide in a different conformation and catalyzes macrocyclization of the N-terminal 7 residues.

Major toxin that belongs to the bicyclic heptapeptides called phallotoxins. Although structurally related to amatoxins, phallotoxins have a different mode of action, which is the stabilization of F-actin. Phallotoxins are poisonous when administered parenterally, but not orally because of poor absorption. This chain is Phallacidin proprotein 1, found in Amanita bisporigera (Destroying angel).